A 312-amino-acid chain; its full sequence is Cathepsin O (312 aa).

The signal sequence occupies residues M1–G23. Positions T24 to S98 are cleaved as a propeptide — activation peptide. N-linked (GlcNAc...) asparagine glycosylation is found at N53 and N96. 3 disulfides stabilise this stretch: C120–C161, C154–C195, and C253–C301. C123 is an active-site residue. Residues H260 and N280 contribute to the active site.

Belongs to the peptidase C1 family.

It is found in the lysosome. It carries out the reaction The recombinant human enzyme hydrolyzes synthetic endopeptidase substrates including Z-Phe-Arg-NHMec and Z-Arg-Arg-NHMec.. Its function is as follows. Proteolytic enzyme possibly involved in normal cellular protein degradation and turnover. The polypeptide is Cathepsin O (Ctso) (Mus musculus (Mouse)).